Consider the following 64-residue polypeptide: Large ribosomal subunit protein bL32 (64 aa).

Positions 1-16 (MAVQKSRKTRSRRGMR) are enriched in basic residues. The segment at 1-64 (MAVQKSRKTR…TPKESYEDEE (64 aa)) is disordered.

The protein belongs to the bacterial ribosomal protein bL32 family.

The sequence is that of Large ribosomal subunit protein bL32 from Coxiella burnetii (strain CbuK_Q154) (Coxiella burnetii (strain Q154)).